Reading from the N-terminus, the 236-residue chain is Large ribosomal subunit protein uL1 (236 aa).

Belongs to the universal ribosomal protein uL1 family. In terms of assembly, part of the 50S ribosomal subunit.

Binds directly to 23S rRNA. The L1 stalk is quite mobile in the ribosome, and is involved in E site tRNA release. In terms of biological role, protein L1 is also a translational repressor protein, it controls the translation of the L11 operon by binding to its mRNA. The protein is Large ribosomal subunit protein uL1 of Kocuria rhizophila (strain ATCC 9341 / DSM 348 / NBRC 103217 / DC2201).